Reading from the N-terminus, the 278-residue chain is S-formylglutathione hydrolase YeiG (278 aa).

Active-site charge relay system residues include serine 145, aspartate 223, and histidine 256.

The protein belongs to the esterase D family.

The catalysed reaction is S-formylglutathione + H2O = formate + glutathione + H(+). Serine hydrolase involved in the detoxification of formaldehyde. Hydrolyzes S-formylglutathione to glutathione and formate. The protein is S-formylglutathione hydrolase YeiG (yeiG) of Escherichia coli O139:H28 (strain E24377A / ETEC).